The sequence spans 217 residues: Large ribosomal subunit protein uL1 (217 aa).

It belongs to the universal ribosomal protein uL1 family. Component of the large ribosomal subunit (LSU). Mature N.crassa ribosomes consist of a small (40S) and a large (60S) subunit. The 40S small subunit contains 1 molecule of ribosomal RNA (18S rRNA) and at least 32 different proteins. The large 60S subunit contains 3 rRNA molecules (26S, 5.8S and 5S rRNA) and at least 42 different proteins. uL1 forms part of the L1 stalk.

The protein resides in the cytoplasm. In terms of biological role, component of the ribosome, a large ribonucleoprotein complex responsible for the synthesis of proteins in the cell. The small ribosomal subunit (SSU) binds messenger RNAs (mRNAs) and translates the encoded message by selecting cognate aminoacyl-transfer RNA (tRNA) molecules. The large subunit (LSU) contains the ribosomal catalytic site termed the peptidyl transferase center (PTC), which catalyzes the formation of peptide bonds, thereby polymerizing the amino acids delivered by tRNAs into a polypeptide chain. The nascent polypeptides leave the ribosome through a tunnel in the LSU and interact with protein factors that function in enzymatic processing, targeting, and the membrane insertion of nascent chains at the exit of the ribosomal tunnel. uL1 forms part of the L1 stalk, a mobile element that plays a role in evacuating the exit-site tRNA. The chain is Large ribosomal subunit protein uL1 (crp-74) from Neurospora crassa (strain ATCC 24698 / 74-OR23-1A / CBS 708.71 / DSM 1257 / FGSC 987).